A 521-amino-acid polypeptide reads, in one-letter code: MGLGKKLSVAVAASFMSLSISLPGVQAAEGHQLKENQTNFLSKNAIAQSELSAPNDKAVKQFLKKNSNIFKGDPSKRLKLVESTTDALGYKHFRYAPVVNGVPIKDSQVIVHVDKSDNVYAVNGELHNQSAAKTDNSQKVSSEKALALAFKAIGKSPDAVSNGAAKNSNKAELKAIETKDGSYRLAYDVTIRYVEPEPANWEVLVDAETGSILKQQNKVEHAAATGSGTTLKGATVPLNISYEGGKYVLRDLSKPTGTQIITYDLQNRQSRLPGTLVSSTTKTFTSSSQRAAVDAHYNLGKVYDYFYSNFKRNSYDNKGSKIVSSVHYGTQYNNAAWTGDQMIYGDGDGSFFSPLSGSLDVTAHEMTHGVTQETANLIYENQPGALNESFSDVFGYFNDTEDWDIGEDITVSQPALRSLSNPTKYNQPDNYANYRNLPNTDEGDYGGVHTNSGIPNKAAYNTITKLGVSKSQQIYYRALTTYLTPSSTFKDAKAALIQSARDLYGSTDAAKVEAAWNAVGL.

Residues Met1 to Ala27 form the signal peptide. A propeptide spans Ala28–His221 (activation peptide). Asp360 serves as a coordination point for Ca(2+). His364 is a binding site for Zn(2+). Glu365 is a catalytic residue. Residues His368 and Glu388 each coordinate Zn(2+). Residues Asp399, Asp402, Asp404, and Glu407 each contribute to the Ca(2+) site. The Proton donor role is filled by His449.

This sequence belongs to the peptidase M4 family. Ca(2+) serves as cofactor. Requires Zn(2+) as cofactor.

It is found in the secreted. The enzyme catalyses Similar, but not identical, to that of thermolysin.. In terms of biological role, extracellular zinc metalloprotease. This chain is Bacillolysin (nprE), found in Bacillus subtilis subsp. amylosacchariticus.